The chain runs to 75 residues: MAFLKKCLFLVLFLGLVSLSICEEEKREEENEEVQEDDDQSEEKRGFLDVIKHVGKAAGKAALNAVTEMVNQGEQ.

The first 22 residues, 1-22, serve as a signal peptide directing secretion; it reads MAFLKKCLFLVLFLGLVSLSIC. Residues 23 to 43 constitute a propeptide that is removed on maturation; it reads EEEKREEENEEVQEDDDQSEE. Residues 25–44 form a disordered region; it reads EKREEENEEVQEDDDQSEEK. The span at 30-41 shows a compositional bias: acidic residues; that stretch reads ENEEVQEDDDQS. Q72 is subject to Glutamine amide. Residues 74–75 constitute a propeptide that is removed on maturation; the sequence is EQ.

Expressed by the skin glands.

It localises to the secreted. Functionally, has antimicrobial activity. The protein is Cruzioseptin-8 of Cruziohyla calcarifer (Splendid leaf frog).